The sequence spans 642 residues: Tigger transposable element-derived protein 5 (642 aa).

Pro residues-rich tracts occupy residues 1 to 10 (MYPAGPPAGP) and 19 to 43 (LPGP…PGPR). A disordered region spans residues 1–45 (MYPAGPPAGPVPRRGRRPLPGPPAPAPAPVPAARPPPPAPGPRPR). One can recognise an HTH psq-type domain in the interval 47–98 (AVKMAFRKAYSIKDKLQAIERVKGGERQASVCRDFGVPGGTLRGWLKDEPKL). 2 DNA-binding regions (H-T-H motif) span residues 74-94 (QASV…WLKD) and 145-178 (PLIQ…WQKR). The 74-residue stretch at 112-185 (QRKKMRLANE…QKRHGISSQR (74 aa)) folds into the HTH CENPB-type domain. The interval 185-233 (RFYGEAGPPAPSPAPGPPVKEEPALPSGAGPLPDRAPAPPPPAEGGYGD) is disordered. 2 stretches are compositionally biased toward pro residues: residues 192 to 202 (PPAPSPAPGPP) and 218 to 227 (DRAPAPPPPA). 2 DDE-1 domains span residues 233-357 (DEQI…VLLV) and 410-477 (RAHI…ERCW). The interval 535–587 (LDDDGGPPEGCREEVGPALPPAAPPAPASLPSAMGGGEDEEEATDYGGTSVPT) is disordered. Residues 552–562 (ALPPAAPPAPA) are compositionally biased toward pro residues.

The protein belongs to the tigger transposable element derived protein family.

It is found in the nucleus. The protein is Tigger transposable element-derived protein 5 (TIGD5) of Homo sapiens (Human).